The sequence spans 398 residues: Acetate kinase (398 aa).

Residue Asn7 coordinates Mg(2+). Lys14 is a binding site for ATP. Arg85 serves as a coordination point for substrate. Asp142 (proton donor/acceptor) is an active-site residue. ATP contacts are provided by residues 202–206 (HLGNG), 277–279 (DMR), and 325–329 (GIGEN). Glu379 serves as a coordination point for Mg(2+).

This sequence belongs to the acetokinase family. Homodimer. Requires Mg(2+) as cofactor. The cofactor is Mn(2+).

Its subcellular location is the cytoplasm. It catalyses the reaction acetate + ATP = acetyl phosphate + ADP. Its pathway is metabolic intermediate biosynthesis; acetyl-CoA biosynthesis; acetyl-CoA from acetate: step 1/2. Catalyzes the formation of acetyl phosphate from acetate and ATP. Can also catalyze the reverse reaction. The chain is Acetate kinase from Deinococcus radiodurans (strain ATCC 13939 / DSM 20539 / JCM 16871 / CCUG 27074 / LMG 4051 / NBRC 15346 / NCIMB 9279 / VKM B-1422 / R1).